A 404-amino-acid chain; its full sequence is Multidrug resistance protein MdtG (404 aa).

A run of 11 helical transmembrane segments spans residues 19-39 (LGCFLTGAAFSLVMPFLPLYV), 56-76 (LVFSITFLFSAIASPFWGGLA), 90-110 (LGMAIVMLLMGMAQNIWQFLI), 113-133 (ALLGLLGGFIPNANALIATQV), 144-164 (TLSTGGVSGALLGPLAGGLLA), 171-191 (PVFFITASVLFICFLLTFFFI), 222-242 (LFVTTLIIQVATGSIAPILTL), 254-274 (IAFISGMIASVPGVAALLSAP), 288-308 (ILIVALIISVLLLIPMSFVQT), 317-337 (FLLGAADGALLPAVQTLLVYN), and 376-396 (AVFCVTAGVVLFNAIYSWNSL).

This sequence belongs to the major facilitator superfamily. DHA1 family. MdtG (TC 2.A.1.2.20) subfamily.

The protein resides in the cell inner membrane. This chain is Multidrug resistance protein MdtG, found in Salmonella typhi.